The primary structure comprises 436 residues: Trigger factor (436 aa).

One can recognise a PPIase FKBP-type domain in the interval 163–248 (TDRVIIDFAG…VKNVAEAILP (86 aa)).

This sequence belongs to the FKBP-type PPIase family. Tig subfamily.

It localises to the cytoplasm. It carries out the reaction [protein]-peptidylproline (omega=180) = [protein]-peptidylproline (omega=0). Its function is as follows. Involved in protein export. Acts as a chaperone by maintaining the newly synthesized protein in an open conformation. Functions as a peptidyl-prolyl cis-trans isomerase. This Laribacter hongkongensis (strain HLHK9) protein is Trigger factor.